Reading from the N-terminus, the 163-residue chain is Cytochrome c-type biogenesis protein CcmE (163 aa).

The Cytoplasmic portion of the chain corresponds to 1–8 (MNPRRKKR). The helical; Signal-anchor for type II membrane protein transmembrane segment at 9–29 (LTLAVALIVGVAGAASLLLYA) threads the bilayer. Residues 30-163 (LNSNLNLFYT…QEGVEKTAQY (134 aa)) lie on the Periplasmic side of the membrane. Heme is bound by residues His131 and Tyr135.

This sequence belongs to the CcmE/CycJ family.

The protein localises to the cell inner membrane. Functionally, heme chaperone required for the biogenesis of c-type cytochromes. Transiently binds heme delivered by CcmC and transfers the heme to apo-cytochromes in a process facilitated by CcmF and CcmH. This chain is Cytochrome c-type biogenesis protein CcmE, found in Shewanella denitrificans (strain OS217 / ATCC BAA-1090 / DSM 15013).